We begin with the raw amino-acid sequence, 716 residues long: uncharacterized protein (716 aa).

Disordered stretches follow at residues 84 to 103 (SPSI…ERYP) and 153 to 189 (VTDE…SQTQ). Serine 97 carries the phosphoserine modification. Glycyl lysine isopeptide (Lys-Gly) (interchain with G-Cter in SUMO2) cross-links involve residues lysine 201, lysine 204, lysine 237, lysine 283, and lysine 626.

This is an uncharacterized protein from Homo sapiens (Human).